The following is a 189-amino-acid chain: Threonylcarbamoyl-AMP synthase (189 aa).

The 184-residue stretch at 6 to 189 (TAIFTPIIDA…VLTGEQIRQG (184 aa)) folds into the YrdC-like domain.

It belongs to the SUA5 family. TsaC subfamily.

It is found in the cytoplasm. It catalyses the reaction L-threonine + hydrogencarbonate + ATP = L-threonylcarbamoyladenylate + diphosphate + H2O. Its function is as follows. Required for the formation of a threonylcarbamoyl group on adenosine at position 37 (t(6)A37) in tRNAs that read codons beginning with adenine. Catalyzes the conversion of L-threonine, HCO(3)(-)/CO(2) and ATP to give threonylcarbamoyl-AMP (TC-AMP) as the acyladenylate intermediate, with the release of diphosphate. This Serratia proteamaculans (strain 568) protein is Threonylcarbamoyl-AMP synthase.